We begin with the raw amino-acid sequence, 152 residues long: Large ribosomal subunit protein uL15 (152 aa).

Residues 18 to 37 (RVARGIGSGKGKTAGRGVKG) form a disordered region. A compositionally biased stretch (gly residues) spans 23-35 (IGSGKGKTAGRGV).

This sequence belongs to the universal ribosomal protein uL15 family. As to quaternary structure, part of the 50S ribosomal subunit.

Its function is as follows. Binds to the 23S rRNA. The protein is Large ribosomal subunit protein uL15 of Rickettsia bellii (strain OSU 85-389).